Consider the following 130-residue polypeptide: Small ribosomal subunit protein uS8 (130 aa).

Belongs to the universal ribosomal protein uS8 family. In terms of assembly, part of the 30S ribosomal subunit. Contacts proteins S5 and S12.

Functionally, one of the primary rRNA binding proteins, it binds directly to 16S rRNA central domain where it helps coordinate assembly of the platform of the 30S subunit. In Nitrosococcus oceani (strain ATCC 19707 / BCRC 17464 / JCM 30415 / NCIMB 11848 / C-107), this protein is Small ribosomal subunit protein uS8.